Consider the following 202-residue polypeptide: Outer-membrane lipoprotein carrier protein (202 aa).

The N-terminal stretch at 1–18 (MNRLFLILLLIFSHEVFS) is a signal peptide.

Belongs to the LolA family. Monomer.

Its subcellular location is the periplasm. Functionally, participates in the translocation of lipoproteins from the inner membrane to the outer membrane. Only forms a complex with a lipoprotein if the residue after the N-terminal Cys is not an aspartate (The Asp acts as a targeting signal to indicate that the lipoprotein should stay in the inner membrane). This is Outer-membrane lipoprotein carrier protein from Legionella pneumophila (strain Lens).